A 77-amino-acid polypeptide reads, in one-letter code: Large ribosomal subunit protein uL24 (77 aa).

This sequence belongs to the universal ribosomal protein uL24 family. Part of the 50S ribosomal subunit.

Functionally, one of two assembly initiator proteins, it binds directly to the 5'-end of the 23S rRNA, where it nucleates assembly of the 50S subunit. One of the proteins that surrounds the polypeptide exit tunnel on the outside of the subunit. The protein is Large ribosomal subunit protein uL24 of Campylobacter fetus subsp. fetus (strain 82-40).